Here is a 221-residue protein sequence, read N- to C-terminus: Vacuolar protein sorting-associated protein 20 (221 aa).

A lipid anchor (N-myristoyl glycine) is attached at Gly-2. A coiled-coil region spans residues 72–178; sequence QEHLLQQASD…LNPEKMNNAK (107 aa). Residues 170–221 form a disordered region; sequence NPEKMNNAKVANMPSTEGLPSLPQGEQTEQKEREEFATEERSDTKEPLALLS. Residues 197-215 show a composition bias toward basic and acidic residues; sequence TEQKEREEFATEERSDTKE.

It belongs to the SNF7 family. In terms of assembly, core component of the ESCRT-III complex (endosomal sorting required for transport complex III). ESCRT-III appears to be sequentially assembled as a flat lattice on the endosome membrane and forms a transient 450 kDa complex that contains DID4, oligomerized SNF7, VPS20 and VPS24. SNF7 oligomerization into a membrane-associated filament is nucleated by association of SNF7 with VPS20; the process is terminated through association of VPS24, possibly by capping the SNF7 filament. VPS24 subsequently associates with DID4/VPS2. Interacts with the VPS4. Interacts with VPS25; the interaction mediates the association with the ESCRT-II complex.

Its subcellular location is the endosome membrane. It localises to the vacuole membrane. In terms of biological role, class E VPS protein implicated in concentration and sorting of cargo proteins of the multivesicular body (MVB) for incorporation into intralumenal vesicles. The lumenal sequestrated membrane proteins will be targeted into the vacuole after fusion of the endosome with the vacuole. Acts a component of the ESCRT-III complex, which appears to be critical for late steps in MVB sorting, such as membrane invagination and final cargo sorting and recruitment of late-acting components of the sorting machinery. The MVB pathway requires the sequential function of ESCRT-O, -I,-II and -III complex assemblies. Required for the oligomerization of SNF7 into a membrane-associated filament. The VPS20-SNF7 subcomplex is responsible for the membrane association of the ESCRT-III complex. Also required for the RIM101 repressor proteolytic activation. The protein is Vacuolar protein sorting-associated protein 20 (VPS20) of Saccharomyces cerevisiae (strain ATCC 204508 / S288c) (Baker's yeast).